The following is a 382-amino-acid chain: Anhydro-N-acetylmuramic acid kinase (382 aa).

9 to 16 is a binding site for ATP; that stretch reads GTSLDGID.

Belongs to the anhydro-N-acetylmuramic acid kinase family.

The enzyme catalyses 1,6-anhydro-N-acetyl-beta-muramate + ATP + H2O = N-acetyl-D-muramate 6-phosphate + ADP + H(+). Its pathway is amino-sugar metabolism; 1,6-anhydro-N-acetylmuramate degradation. The protein operates within cell wall biogenesis; peptidoglycan recycling. Functionally, catalyzes the specific phosphorylation of 1,6-anhydro-N-acetylmuramic acid (anhMurNAc) with the simultaneous cleavage of the 1,6-anhydro ring, generating MurNAc-6-P. Is required for the utilization of anhMurNAc either imported from the medium or derived from its own cell wall murein, and thus plays a role in cell wall recycling. The polypeptide is Anhydro-N-acetylmuramic acid kinase (Bacillus cereus (strain ZK / E33L)).